The sequence spans 188 residues: Putative manganese efflux pump MntP (188 aa).

Transmembrane regions (helical) follow at residues 3–23, 35–55, 63–83, 104–126, 140–160, and 167–187; these read LYAL…VALA, IAAT…AGWV, FISE…GLKM, WMTV…GLAF, MAAT…GVLF, and AGGL…LGLI.

Belongs to the MntP (TC 9.B.29) family.

The protein localises to the cell inner membrane. Functionally, probably functions as a manganese efflux pump. This is Putative manganese efflux pump MntP from Neisseria gonorrhoeae (strain ATCC 700825 / FA 1090).